A 763-amino-acid chain; its full sequence is MSELLSFALFLASVLIYAWKAGRNTWWFAATLTVLGLFVVLNITLFASDYFTGDGINDAVLYTLTNSLTGAGVSKYILPGIGIVLGLAAVFGALGWILRRRRHHPHHFGYSLLALLLALGSVDASPAFRQITELVKSQSRDGDPDFAAYYKEPSKTIPDPKLNLVYIYGESLERTYFDNEAFPDLTPELGALKNEGLDFSHTQQLPGTDYTIAGMVASQCGIPLFAPFEGNASASVSSFFPQNICLGDILKNSGYQNYFVQGANLRFAGKDVFLKSHGFDHLYGSEELKSVVADPHYRNDWGFYDDTVLDEAWKKFEELSRSGQRFSLFTLTVDTHHPDGFISRTCNRKKYDFDGKPNQSFSAVSCSQENIATFINKIKASPWFKDTVIVVSSDHLAMNNTAWKYLNKQDRNNLFFVIRGDKPQQETLAVKRNTMDNGATVLDILGGDNYLGLGRSSLSGQSMSEIFLNIKEKTLAWKPDIIRLWKFPKEMKEFTIDQQKNMIAFSGSHFRLPLLLRVSDKRVEPLPESEYSAPLRFQLADFAPRDNFVWVDRCYKMAQLWAPELALSTDWCVSQGQLGGQQIVQHVDKAIWKGKTAFKDTVIDMARYKGNVDTLKIVDNDIRYKADSFIFNVAGAPEEVKQFSGISRPESWGRWSNAQLGDEVKIEYKHPLPKKFDLVITAKAYGNNASRPIPVRVGNEEQTLVLGNEVTTTTLHFDNPTDADTLVIVPPEPVSTNEGNILGHSPRKLGIGMVEIKVVEREG.

The next 4 membrane-spanning stretches (helical) occupy residues 4–19, 26–48, 76–98, and 105–127; these read LLSFALFLASVLIYAW, WWFAATLTVLGLFVVLNITLFAS, YILPGIGIVLGLAAVFGALGWIL, and PHHFGYSLLALLLALGSVDASPA.

The protein belongs to the OpgB family.

It is found in the cell inner membrane. The catalysed reaction is a phosphatidylglycerol + a membrane-derived-oligosaccharide D-glucose = a 1,2-diacyl-sn-glycerol + a membrane-derived-oligosaccharide 6-(glycerophospho)-D-glucose.. It functions in the pathway glycan metabolism; osmoregulated periplasmic glucan (OPG) biosynthesis. Its function is as follows. Transfers a phosphoglycerol residue from phosphatidylglycerol to the membrane-bound nascent glucan backbones. The sequence is that of Phosphoglycerol transferase I from Escherichia coli O6:H1 (strain CFT073 / ATCC 700928 / UPEC).